Here is a 1020-residue protein sequence, read N- to C-terminus: MRRFLRPGHDPVRERLKRDLFQFNKTVEHGFPHQPSALGYSPSLRILAIGTRSGAIKLYGAPGVEFMGLHQENNAVTQIHLLPGQCQLVTLLDDNSLHLWSLKVKGGASELQEDESFTLRGPPGAAPSATQITVVLPHSSCELLYLGTESGNVFVVQLPAFRALEDRTISSDAVLQRLPEEARHRRVFEMVEALQEHPRDPNQILIGYSRGLVVIWDLQGSRVLYHFLSSQQLENIWWQRDGRLLVSCHSDGSYCQWPVSSEAQQPEPLRSLVPYGPFPCKAITRILWLTTRQGLPFTIFQGGMPRASYGDRHCISVIHDGQQTAFDFTSRVIGFTVLTEADPAATFDDPYALVVLAEEELVVIDLQTAGWPPVQLPYLASLHCSAITCSHHVSNIPLKLWERIIAAGSRQNAHFSTMEWPIDGGTSLTPAPPQRDLLLTGHEDGTVRFWDASGVCLRLLYKLSTVRVFLTDTDPNENFSAQGEDEWPPLRKVGSFDPYSDDPRLGIQKIFLCKYSGYLAVAGTAGQVLVLELNDEAAEQAVEQVEADLLQDQEGYRWKGHERLAARSGPVRFEPGFQPFVLVQCQPPAVVTSLALHSEWRLVAFGTSHGFGLFDHQQRRQVFVKCTLHPSDQLALEGPLSRVKSLKKSLRQSFRRMRRSRVSSRKRHPAGPPGEAQEGSAKAERPGLQNMELAPVQRKIEARSAEDSFTGFVRTLYFADTYLKDSSRHCPSLWAGTNGGTIYAFSLRVPPAERRMDEPVRAEQAKEIQLMHRAPVVGILVLDGHSVPLPEPLEVAHDLSKSPDMQGSHQLLVVSEEQFKVFTLPKVSAKLKLKLTALEGSRVRRVSVAHFGSRRAEDYGEHHLAVLTNLGDIQVVSLPLLKPQVRYSCIRREDVSGIASCVFTKYGQGFYLISPSEFERFSLSTKWLVEPRCLVDSAETKNHRPGNGAGPKKAPSRARNSGTQSDGEEKQPGLVMERALLSDERVLKEIQSTLEGDRGSGNWRSHRAAVGCSLSNGGAE.

14 WD repeats span residues 36-69 (SALG…FMGL), 76-117 (VTQI…DESF), 132-169 (ITVV…DRTI), 193-227 (ALQE…LYHF), 233-268 (LENI…QPEP), 282-324 (AITR…GQQT), 332-366 (VIGF…VIDL), 388-464 (TCSH…YKLS), 508-583 (QKIF…FVLV), 592-653 (TSLA…LRQS), 713-769 (VRTL…KEIQ), 778-830 (GILV…VSAK), 835-888 (LTAL…VRYS), and 902-925 (VFTK…SLST). S653 is modified (phosphoserine). The span at 653 to 669 (SFRRMRRSRVSSRKRHP) shows a compositional bias: basic residues. The interval 653-689 (SFRRMRRSRVSSRKRHPAGPPGEAQEGSAKAERPGLQ) is disordered. Disordered regions lie at residues 938 to 975 (AETK…PGLV) and 992 to 1020 (STLE…GGAE). Phosphoserine occurs at positions 965 and 1015.

The protein belongs to the WD repeat L(2)GL family. As to quaternary structure, interacts with GPSM2/LGN, PRKCI/aPKC and PARD6B/Par-6. The complex is enhanced during mitosis. Interacts with DCAF1. In terms of processing, phosphorylated at Ser-653 by PRKCI. Phosphorylation is enhanced during cell polarization induced by calcium. Phosphorylation may occur during the cell-cell contact-induced cell polarization and may contribute to the segregation of LLGL2 from the PRKCI/aPKC and PARD6B/Par-6 complex.

It is found in the cytoplasm. Part of a complex with GPSM2/LGN, PRKCI/aPKC and PARD6B/Par-6, which may ensure the correct organization and orientation of bipolar spindles for normal cell division. This complex plays roles in the initial phase of the establishment of epithelial cell polarity. This is LLGL scribble cell polarity complex component 2 (LLGL2) from Homo sapiens (Human).